The primary structure comprises 170 residues: Ubiquitin-conjugating enzyme E2 G1 (170 aa).

An N-acetylmethionine modification is found at M1. An N-acetylthreonine; in Ubiquitin-conjugating enzyme E2 G1, N-terminally processed modification is found at T2. A UBC core domain is found at 5–166; sequence QSALLLRRQL…VARCVRKSQE (162 aa). The Glycyl thioester intermediate role is filled by C90.

The protein belongs to the ubiquitin-conjugating enzyme family. Autoubiquitinated.

The enzyme catalyses S-ubiquitinyl-[E1 ubiquitin-activating enzyme]-L-cysteine + [E2 ubiquitin-conjugating enzyme]-L-cysteine = [E1 ubiquitin-activating enzyme]-L-cysteine + S-ubiquitinyl-[E2 ubiquitin-conjugating enzyme]-L-cysteine.. It participates in protein modification; protein ubiquitination. Its function is as follows. Accepts ubiquitin from the E1 complex and catalyzes its covalent attachment to other proteins. In vitro catalyzes 'Lys-48'-, as well as 'Lys-63'-linked polyubiquitination. May be involved in degradation of muscle-specific proteins. Mediates polyubiquitination of CYP3A4. The protein is Ubiquitin-conjugating enzyme E2 G1 (UBE2G1) of Macaca fascicularis (Crab-eating macaque).